We begin with the raw amino-acid sequence, 348 residues long: MDRRDAMGLSGSGSYYIHRGLSGSGPPTFHGSPQQQQGLRHLPNQNSPFGSGSTGFGSPSLHGDPSLATAAGGAGALPHHIGVNMIAPPPPPSETPMKRKRGRPRKYGQDGSVSLALSSSSVSTITPNNSNKRGRGRPPGSGKKQRMASVGELMPSSSGMSFTPHVIAVSIGEDIASKVIAFSQQGPRAICVLSASGAVSTATLIQPSASPGAIKYEGRFEILALSTSYIVATDGSFRNRTGNLSVSLASPDGRVIGGAIGGPLIAASPVQVIVGSFIWAAPKIKSKKREEEASEVVQETDDHHVLDNNNNTISPVPQQQPNQNLIWSTGSRQMDMRHAHADIDLMRG.

The interval 18–156 is disordered; sequence HRGLSGSGPP…MASVGELMPS (139 aa). Positions 31–46 are enriched in polar residues; it reads GSPQQQQGLRHLPNQN. Positions 47-60 are enriched in low complexity; it reads SPFGSGSTGFGSPS. Residues 98–106 carry the Bipartite nuclear localization signal motif; sequence KRKRGRPRK. Residues 98-110 constitute a DNA-binding region (a.T hook 1); sequence KRKRGRPRKYGQD. Positions 112–131 are enriched in low complexity; that stretch reads SVSLALSSSSVSTITPNNSN. The segment at residues 132–144 is a DNA-binding region (a.T hook 2); that stretch reads KRGRGRPPGSGKK. The PPC domain maps to 157-299; sequence SSGMSFTPHV…EEEASEVVQE (143 aa).

Its subcellular location is the nucleus. In terms of biological role, transcription factor that specifically binds AT-rich DNA sequences related to the nuclear matrix attachment regions (MARs). This is AT-hook motif nuclear-localized protein 9 from Arabidopsis thaliana (Mouse-ear cress).